The sequence spans 249 residues: Small ribosomal subunit protein uS2 (249 aa).

The protein belongs to the universal ribosomal protein uS2 family.

In Acinetobacter baylyi (strain ATCC 33305 / BD413 / ADP1), this protein is Small ribosomal subunit protein uS2.